The chain runs to 112 residues: UPF0342 protein SUB0718 (112 aa).

Belongs to the UPF0342 family.

This Streptococcus uberis (strain ATCC BAA-854 / 0140J) protein is UPF0342 protein SUB0718.